A 364-amino-acid chain; its full sequence is Methylthioribose-1-phosphate isomerase (364 aa).

Residues 53 to 55, R90, and Q203 contribute to the substrate site; that span reads RGA. The active-site Proton donor is the D244. 254–255 is a substrate binding site; the sequence is NK.

It belongs to the eIF-2B alpha/beta/delta subunits family. MtnA subfamily.

It catalyses the reaction 5-(methylsulfanyl)-alpha-D-ribose 1-phosphate = 5-(methylsulfanyl)-D-ribulose 1-phosphate. It participates in amino-acid biosynthesis; L-methionine biosynthesis via salvage pathway; L-methionine from S-methyl-5-thio-alpha-D-ribose 1-phosphate: step 1/6. In terms of biological role, catalyzes the interconversion of methylthioribose-1-phosphate (MTR-1-P) into methylthioribulose-1-phosphate (MTRu-1-P). The sequence is that of Methylthioribose-1-phosphate isomerase from Rhizobium meliloti (strain 1021) (Ensifer meliloti).